A 374-amino-acid chain; its full sequence is Coiled-coil domain-containing protein 89 (374 aa).

The interval 1–38 (MRAPMPQKEQAPRMDTSPPEERLEKQNEKLNNQEEEME) is disordered. Residue Thr-16 is modified to Phosphothreonine. The segment covering 19-32 (PEERLEKQNEKLNN) has biased composition (basic and acidic residues). Residues 19 to 350 (PEERLEKQNE…YDELRLQSEA (332 aa)) adopt a coiled-coil conformation.

It belongs to the CCDC89 family. In terms of assembly, interacts with HEY1.

It localises to the cytoplasm. The protein localises to the nucleus. The sequence is that of Coiled-coil domain-containing protein 89 (CCDC89) from Macaca fascicularis (Crab-eating macaque).